A 954-amino-acid chain; its full sequence is Chromosomal passenger complex protein BIR1 (954 aa).

BIR repeat units lie at residues 20–117 (RLRT…LLIY) and 153–241 (RKFT…YFFQ). 4 residues coordinate Zn(2+): C208, C211, H228, and C237. Residues 375–419 (NVQLTQSSSPIKKKRKFKRISPRKIFDEEDSEHSLNNNSANGDNK) form a disordered region. The span at 385-396 (IKKKRKFKRISP) shows a compositional bias: basic residues. Residues S477, S508, and S552 each carry the phosphoserine modification. Disordered stretches follow at residues 541 to 645 (DIDR…SGKV) and 661 to 685 (FSAS…ISTP). Basic and acidic residues predominate over residues 556–583 (PKTHELIRDNSEKREAQNGEFRHQKDST). Phosphoserine is present on S587. Polar residues predominate over residues 593–604 (SNKSGDNSSNIT). Phosphoserine occurs at positions 751 and 765. Positions 798-839 (LVSGTSSYPRNSRLEEQRKETSTSLADNSKKGSSFNEGNNEK) are disordered. The span at 809-818 (SRLEEQRKET) shows a compositional bias: basic and acidic residues. Polar residues predominate over residues 819–835 (STSLADNSKKGSSFNEG).

As to quaternary structure, component of the CPC complex at least composed of IPL1, BIR1 and SLI15. Interacts with CBF2/NDC10. Interacts with CBF3D/SKP1.

Component of the chromosomal passenger complex (CPC), a complex that acts as a key regulator of chromosome segregation and cytokinesis. This chain is Chromosomal passenger complex protein BIR1 (BIR1), found in Saccharomyces cerevisiae (strain ATCC 204508 / S288c) (Baker's yeast).